Reading from the N-terminus, the 163-residue chain is MAAAVLLAVGLRAARRTLAAAGARGAQVRGNAGVSDGSEVAKAQKAAPGGASPTIFSRILDRSLPADILYEDQQCLVFRDVAPQAPVHFLVIPRKPIPRISQAEEDDQQLLGHLLLVAKKIAQAQGLKDGYRLVVNDGKMGAQSVYHLHIHVLGGRQLQWPPG.

The transit peptide at 1–17 (MAAAVLLAVGLRAARRT) directs the protein to the mitochondrion. The residue at position 45 (Lys-45) is an N6-succinyllysine. Positions 55-163 (IFSRILDRSL…GGRQLQWPPG (109 aa)) constitute an HIT domain. Residues Ser-63 and Asp-80 each coordinate AMP. Residue Lys-119 is modified to N6-acetyllysine. Lys-128 is modified (N6-acetyllysine; alternate). Lys-128 is subject to N6-succinyllysine; alternate. AMP is bound at residue Asn-136. Position 139 is an N6-acetyllysine (Lys-139). Residues 142-145 (AQSV) and 149-151 (HIH) contribute to the AMP site. The Histidine triad motif signature appears at 147 to 151 (HLHIH). His-149 (tele-AMP-histidine intermediate) is an active-site residue.

This sequence belongs to the HINT family.

It is found in the mitochondrion. The enzyme catalyses adenosine 5'-phosphoramidate + H2O = AMP + NH4(+). In terms of biological role, exhibits adenosine 5'-monophosphoramidase activity, hydrolyzing purine nucleotide phosphoramidates with a single phosphate group such as adenosine 5'monophosphoramidate (AMP-NH2) to yield AMP and NH2. Hydrolyzes adenosine 5'-O-p-nitrophenylphosphoramidate (AMP-pNA). May be involved in steroid biosynthesis. May play a role in apoptosis. In Mus musculus (Mouse), this protein is Adenosine 5'-monophosphoramidase HINT2.